The sequence spans 278 residues: Large ribosomal subunit protein uL2 (278 aa).

Disordered regions lie at residues 33 to 53 (LTEG…TSRG) and 219 to 278 (LTRG…KKKR). Basic residues predominate over residues 269–278 (IRSRHAKKKR).

This sequence belongs to the universal ribosomal protein uL2 family. In terms of assembly, part of the 50S ribosomal subunit. Forms a bridge to the 30S subunit in the 70S ribosome.

Its function is as follows. One of the primary rRNA binding proteins. Required for association of the 30S and 50S subunits to form the 70S ribosome, for tRNA binding and peptide bond formation. It has been suggested to have peptidyltransferase activity; this is somewhat controversial. Makes several contacts with the 16S rRNA in the 70S ribosome. This chain is Large ribosomal subunit protein uL2, found in Sphingopyxis alaskensis (strain DSM 13593 / LMG 18877 / RB2256) (Sphingomonas alaskensis).